The following is a 511-amino-acid chain: Vesicular acetylcholine transporter (511 aa).

Over M1–K36 the chain is Cytoplasmic. Residues I37–V57 form a helical membrane-spanning segment. Over P58–G108 the chain is Lumenal, vesicle. Residues N80, N83, and N88 are each glycosylated (N-linked (GlcNAc...) asparagine). Residues V109–I129 form a helical membrane-spanning segment. Residues D130–D135 lie on the Cytoplasmic side of the membrane. The chain crosses the membrane as a helical span at residues I136–E156. Topologically, residues S157–R165 are lumenal, vesicle. Residues S166 to K186 traverse the membrane as a helical segment. Residues Y187–L197 are Cytoplasmic-facing. A helical membrane pass occupies residues G198–L218. At Y219–W225 the chain is on the lumenal, vesicle side. A helical membrane pass occupies residues V226 to V246. Over T247–M267 the chain is Cytoplasmic. Residues I268–F288 form a helical membrane-spanning segment. The Lumenal, vesicle segment spans residues L289–W306. A glycan (N-linked (GlcNAc...) asparagine) is linked at N302. The chain crosses the membrane as a helical span at residues Q307 to V327. Over K328–Q337 the chain is Cytoplasmic. Residues W338–C358 form a helical membrane-spanning segment. The Lumenal, vesicle portion of the chain corresponds to R359–E363. The chain crosses the membrane as a helical span at residues L364 to P384. The Cytoplasmic portion of the chain corresponds to T385–S400. The chain crosses the membrane as a helical span at residues V401 to G421. Residues Q422–G428 are Lumenal, vesicle-facing. The helical transmembrane segment at F429–F449 threads the bilayer. The Cytoplasmic portion of the chain corresponds to L450–E511. Residues E485–E511 form a disordered region.

This sequence belongs to the major facilitator superfamily. Vesicular transporter family. As to expression, high expression in the electric lobe of the brain.

The protein resides in the membrane. Involved in acetylcholine transport into synaptic vesicles. The polypeptide is Vesicular acetylcholine transporter (Torpedo marmorata (Marbled electric ray)).